A 452-amino-acid polypeptide reads, in one-letter code: MELKDKKILVVGLAKTGVAVTRFLAQAGAFVTVTDMREEEALSDVLAELSDLDITYELGRHVPYSFLMADLIVVSPGVPMDIKPLEMARSQKRRVVSEVELASWFIKAPMVAITGTNGKTTTTTLTGEIFKACGFETFVGGNIGNPLIELAESGQEVSRVVVELSSFQLEGVESFRPDVAVLLNITEDHLDRYHSFQEYIDAKLRIFENQTADDFAVLNIDDPLVAACASKLKAQLFPMSRLHELEEGISYRDGFITFSHKGKVLRFGTEGFKLKGVHNLDNIMASLASTLLMRCDGDCAYEAVKNFKGLPHRMELVEEIDGVAYYEDSKGTNVGSVVKSLESFDSGITLIAGGKDKGGSYEPLAPLVESRVSHLVLIGEAKARMNEALGSLTDTHLAETLEEAVEISRRLTKPGGVVLFSPACSSFDMFKNYEERAQRFKAAVRAGKKGEA.

115–121 (GTNGKTT) serves as a coordination point for ATP.

The protein belongs to the MurCDEF family.

The protein localises to the cytoplasm. It catalyses the reaction UDP-N-acetyl-alpha-D-muramoyl-L-alanine + D-glutamate + ATP = UDP-N-acetyl-alpha-D-muramoyl-L-alanyl-D-glutamate + ADP + phosphate + H(+). It participates in cell wall biogenesis; peptidoglycan biosynthesis. Its function is as follows. Cell wall formation. Catalyzes the addition of glutamate to the nucleotide precursor UDP-N-acetylmuramoyl-L-alanine (UMA). The polypeptide is UDP-N-acetylmuramoylalanine--D-glutamate ligase (Citrifermentans bemidjiense (strain ATCC BAA-1014 / DSM 16622 / JCM 12645 / Bem) (Geobacter bemidjiensis)).